Reading from the N-terminus, the 257-residue chain is S-methyl-5'-thioadenosine phosphorylase (257 aa).

Phosphate contacts are provided by residues Ser-10 and 50–51 (RH). Residue Met-180 coordinates substrate. Thr-181 is a binding site for phosphate. 204–206 (DYD) provides a ligand contact to substrate.

The protein belongs to the PNP/MTAP phosphorylase family. MTAP subfamily. As to quaternary structure, homohexamer. Dimer of a homotrimer.

It catalyses the reaction S-methyl-5'-thioadenosine + phosphate = 5-(methylsulfanyl)-alpha-D-ribose 1-phosphate + adenine. The protein operates within amino-acid biosynthesis; L-methionine biosynthesis via salvage pathway; S-methyl-5-thio-alpha-D-ribose 1-phosphate from S-methyl-5'-thioadenosine (phosphorylase route): step 1/1. Functionally, catalyzes the reversible phosphorylation of S-methyl-5'-thioadenosine (MTA) to adenine and 5-methylthioribose-1-phosphate. Involved in the breakdown of MTA, a major by-product of polyamine biosynthesis. Responsible for the first step in the methionine salvage pathway after MTA has been generated from S-adenosylmethionine. Has broad substrate specificity with 6-aminopurine nucleosides as preferred substrates. The sequence is that of S-methyl-5'-thioadenosine phosphorylase (mntP) from Pyrococcus abyssi (strain GE5 / Orsay).